Consider the following 260-residue polypeptide: Thiazole synthase (260 aa).

Lysine 96 acts as the Schiff-base intermediate with DXP in catalysis. 1-deoxy-D-xylulose 5-phosphate contacts are provided by residues glycine 157, 184-185 (AG), and 206-207 (NT).

Belongs to the ThiG family. In terms of assembly, homotetramer. Forms heterodimers with either ThiH or ThiS.

The protein resides in the cytoplasm. The catalysed reaction is [ThiS sulfur-carrier protein]-C-terminal-Gly-aminoethanethioate + 2-iminoacetate + 1-deoxy-D-xylulose 5-phosphate = [ThiS sulfur-carrier protein]-C-terminal Gly-Gly + 2-[(2R,5Z)-2-carboxy-4-methylthiazol-5(2H)-ylidene]ethyl phosphate + 2 H2O + H(+). Its pathway is cofactor biosynthesis; thiamine diphosphate biosynthesis. Its function is as follows. Catalyzes the rearrangement of 1-deoxy-D-xylulose 5-phosphate (DXP) to produce the thiazole phosphate moiety of thiamine. Sulfur is provided by the thiocarboxylate moiety of the carrier protein ThiS. In vitro, sulfur can be provided by H(2)S. This is Thiazole synthase from Bradyrhizobium sp. (strain BTAi1 / ATCC BAA-1182).